Here is a 115-residue protein sequence, read N- to C-terminus: Large ribosomal subunit protein bL20 (115 aa).

This sequence belongs to the bacterial ribosomal protein bL20 family.

Functionally, binds directly to 23S ribosomal RNA and is necessary for the in vitro assembly process of the 50S ribosomal subunit. It is not involved in the protein synthesizing functions of that subunit. This is Large ribosomal subunit protein bL20 from Synechococcus sp. (strain CC9311).